We begin with the raw amino-acid sequence, 192 residues long: Shikimate kinase (192 aa).

32–37 contributes to the ATP binding site; sequence GAGKSA. Serine 36 is a binding site for Mg(2+). Substrate-binding residues include aspartate 54, arginine 78, and glycine 100. Arginine 138 is a binding site for ATP. Arginine 157 serves as a coordination point for substrate.

Belongs to the shikimate kinase family. Monomer. Mg(2+) serves as cofactor.

The protein resides in the cytoplasm. It catalyses the reaction shikimate + ATP = 3-phosphoshikimate + ADP + H(+). It functions in the pathway metabolic intermediate biosynthesis; chorismate biosynthesis; chorismate from D-erythrose 4-phosphate and phosphoenolpyruvate: step 5/7. Its function is as follows. Catalyzes the specific phosphorylation of the 3-hydroxyl group of shikimic acid using ATP as a cosubstrate. This is Shikimate kinase from Rhizobium meliloti (strain 1021) (Ensifer meliloti).